Consider the following 482-residue polypeptide: MNKSRAPPDARIQKMRELEERLANLKADRKVEQKMVAVAEFEARTTKKIVGNLVQQRYDALKARAEADLNARRQRLADKLDAEDLAMRQELLASKKTPEQRRAELAERARALAATREAERQALASTLYEKAFIQSCDVLRDENSKRILYRTIEERNAQIEHKMAQRIMEAEEKRMWHEMSEVERQKMEQRYLDDKRRDREKREEVLRILDEQVRQVNARRAEASMLRRAEIAELNATWRQMAADQEAADVQERENMKKLAAELQEFNRIKQMEISEAERSERELDLKILQEALSKEAADEAAELAFRERRREEMRRYREQLALMMEKEREETAERDALILKAQLEQEAKRDAELAARDEARRQLMAQVDAIRQIQIQEKLAKRLERAEEKAFERAQMAEEVAKAESDAAAKDAADRKAGIQRRLELQTMMVAKAHMKAAELDEKLAEGEATKRVEDQFKAKVNQTLSSTDPPVWHGRRKFDW.

Coiled coils occupy residues 9 to 40 (DARI…AVAE), 67 to 124 (ADLN…QALA), and 152 to 413 (IEER…AKDA). The interval 462 to 482 (VNQTLSSTDPPVWHGRRKFDW) is disordered.

Belongs to the CFAP53 family.

It is found in the cell projection. The protein resides in the cilium. The protein localises to the flagellum. Its function is as follows. May play a role in filopodium movement. This is Cilia- and flagella-associated protein 53 from Chlamydomonas reinhardtii (Chlamydomonas smithii).